The sequence spans 241 residues: 1-(5-phosphoribosyl)-5-[(5-phosphoribosylamino)methylideneamino] imidazole-4-carboxamide isomerase (241 aa).

Asp8 acts as the Proton acceptor in catalysis. Asp130 (proton donor) is an active-site residue.

This sequence belongs to the HisA/HisF family.

It localises to the cytoplasm. The enzyme catalyses 1-(5-phospho-beta-D-ribosyl)-5-[(5-phospho-beta-D-ribosylamino)methylideneamino]imidazole-4-carboxamide = 5-[(5-phospho-1-deoxy-D-ribulos-1-ylimino)methylamino]-1-(5-phospho-beta-D-ribosyl)imidazole-4-carboxamide. It functions in the pathway amino-acid biosynthesis; L-histidine biosynthesis; L-histidine from 5-phospho-alpha-D-ribose 1-diphosphate: step 4/9. The protein is 1-(5-phosphoribosyl)-5-[(5-phosphoribosylamino)methylideneamino] imidazole-4-carboxamide isomerase of Leptospira borgpetersenii serovar Hardjo-bovis (strain L550).